A 257-amino-acid chain; its full sequence is tRNA pseudouridine synthase A (257 aa).

Catalysis depends on Asp43, which acts as the Nucleophile. Tyr94 is a binding site for substrate.

Belongs to the tRNA pseudouridine synthase TruA family.

It catalyses the reaction uridine(38/39/40) in tRNA = pseudouridine(38/39/40) in tRNA. In terms of biological role, formation of pseudouridine at positions 38, 39 and 40 in the anticodon stem and loop of transfer RNAs. The sequence is that of tRNA pseudouridine synthase A from Pyrobaculum arsenaticum (strain DSM 13514 / JCM 11321 / PZ6).